Here is a 616-residue protein sequence, read N- to C-terminus: Chaperone protein HscA homolog (616 aa).

This sequence belongs to the heat shock protein 70 family.

Functionally, chaperone involved in the maturation of iron-sulfur cluster-containing proteins. Has a low intrinsic ATPase activity which is markedly stimulated by HscB. The polypeptide is Chaperone protein HscA homolog (Vibrio atlanticus (strain LGP32) (Vibrio splendidus (strain Mel32))).